The chain runs to 266 residues: Proteasome subunit beta type-7 (266 aa).

Residues 1-33 (MNHDPFSWGRPADSTYGAYNTQIANAGASPMVN) constitute a propeptide that is removed on maturation.

This sequence belongs to the peptidase T1B family. As to quaternary structure, the 26S proteasome consists of a 20S proteasome core and two 19S regulatory subunits. The 20S proteasome core is composed of 28 subunits that are arranged in four stacked rings, resulting in a barrel-shaped structure. The two end rings are each formed by seven alpha subunits, and the two central rings are each formed by seven beta subunits. The catalytic chamber with the active sites is on the inside of the barrel. Interacts with CIC1.

It is found in the cytoplasm. It localises to the nucleus. Its function is as follows. Non-catalytic component of the proteasome which degrades poly-ubiquitinated proteins in the cytoplasm and in the nucleus. It is essential for the regulated turnover of proteins and for the removal of misfolded proteins. The proteasome is a multicatalytic proteinase complex that is characterized by its ability to cleave peptides with Arg, Phe, Tyr, Leu, and Glu adjacent to the leaving group at neutral or slightly basic pH. It has an ATP-dependent proteolytic activity. PRE3 and PRE4 are necessary for the peptidyl-glutamyl-peptide-hydrolyzing activity. The polypeptide is Proteasome subunit beta type-7 (PRE4) (Saccharomyces cerevisiae (strain ATCC 204508 / S288c) (Baker's yeast)).